Here is a 331-residue protein sequence, read N- to C-terminus: Phospholipase A2 inhibitor (331 aa).

The first 23 residues, 1–23 (MKSSVPSLLIACLVMSLNSYTQQ), serve as a signal peptide directing secretion. A glycan (N-linked (GlcNAc...) asparagine) is linked at Asn35. LRR repeat units lie at residues 78-101 (LPNLQELHLSNNRLKTLPSGLFRN), 103-125 (PQLHTLDLSTNHLEDLPPEIFTN), 127-149 (SSLILLPLSENQLAELHPSWFQT), 150-173 (LGELRILGLDHNQVKEIPISCFDK), 175-197 (KKLTSLDLSFNLLRRLAPEMFSG), 199-221 (DNLEKLILESNPIQCIVGRTFHW), 223-244 (PKLTVLSLKNSSLTNIMGFFQP), and 245-268 (LEQLELLDLSDNELTTMEPPVYKT). Asn125 carries N-linked (GlcNAc...) asparagine glycosylation. Asn232 carries an N-linked (GlcNAc...) asparagine glycan. An N-linked (GlcNAc...) asparagine glycan is attached at Asn271. The 52-residue stretch at 279–330 (NPWACDCRLDNLLTWVNEHNIHLYSKEEIVCASPKHFKGECATSLHKSQICP) folds into the LRRCT domain.

As to quaternary structure, homotrimer.

It localises to the secreted. Inhibits the enzymatic activity of the basic phospholipase A2 (PLA2). In Gloydius brevicaudus siniticus (Chinese mamushi), this protein is Phospholipase A2 inhibitor.